Reading from the N-terminus, the 113-residue chain is U11-theraphotoxin-Hhn1a (113 aa).

A signal peptide spans 1 to 21 (MNTVRVTFLLVFVLAVSLGQA). The propeptide occupies 22-74 (DKDENRMEMQEKTEQGRSYLDFAENLLLQKLEELEAKLLEEDSEESRNSRQKR). The segment at 61-83 (EEDSEESRNSRQKRCIGEGVPCD) is disordered. 3 disulfides stabilise this stretch: C75–C90, C82–C95, and C89–C110.

The protein belongs to the neurotoxin 14 (magi-1) family. 01 (HNTX-16) subfamily. In terms of tissue distribution, expressed by the venom gland.

The protein localises to the secreted. Its function is as follows. Probable ion channel inhibitor. The chain is U11-theraphotoxin-Hhn1a from Cyriopagopus hainanus (Chinese bird spider).